The chain runs to 74 residues: Acyclotide phyb-K (74 aa).

The first 24 residues, 1 to 24 (MARVNSLKCALCFIVLILFVQLNC), serve as a signal peptide directing secretion. A propeptide spanning residues 25-43 (IPETRVMAVELSRVFLQTS) is cleaved from the precursor. 3 disulfides stabilise this stretch: cysteine 47–cysteine 64, cysteine 51–cysteine 66, and cysteine 56–cysteine 71.

Contains 3 disulfide bonds. Expressed in midvein, lamina and periphery of leaves (at protein level).

In terms of biological role, probably participates in a plant defense mechanism. This chain is Acyclotide phyb-K, found in Petunia hybrida (Petunia).